The primary structure comprises 748 residues: Ribonucleoprotein PTB-binding 1 (748 aa).

The interval 1 to 42 (MAADVSVTHRPPLSPEAEAEAETPETVDRRTPEQELPPLDPE) is disordered. N-acetylalanine is present on A2. 2 positions are modified to phosphoserine: S6 and S14. The residue at position 31 (T31) is a Phosphothreonine. The Nuclear localization signal signature appears at 45-60 (RKRLEHTERQFRNRRK). 3 RRM domains span residues 59 to 130 (RKIL…LQPT), 132 to 210 (ALLC…WTDA), and 221 to 299 (RCLC…FCAP). The segment at 307 to 401 (LAALIAAQAT…QSQSQKKPGI (95 aa)) is interaction with PTBP1. 3 disordered regions span residues 390-505 (QSQS…GEPP), 525-647 (SNLA…PLSH), and 672-731 (KAVG…QHSQ). T469 carries the post-translational modification Phosphothreonine. Phosphoserine occurs at positions 480, 576, 626, and 630. Residues 675-685 (GSSPMGSSEGL) show a composition bias toward low complexity. A phosphoserine mark is found at S716 and S720. Positions 743–746 (KRKR) match the Nuclear localization signal motif.

As to quaternary structure, interacts with PTBP1, RAVER2, VCL and ACTN1. Part of a complex containing RAVER1, VCL and ACTN1. In terms of tissue distribution, ubiquitous. Detected in aorta, brain, gut, heart, kidney, liver, spleen, uterus and skeletal muscle.

The protein resides in the nucleus. Its subcellular location is the cytoplasm. Cooperates with PTBP1 to modulate regulated alternative splicing events. Promotes exon skipping. Cooperates with PTBP1 to modulate switching between mutually exclusive exons during maturation of the TPM1 pre-mRNA. The chain is Ribonucleoprotein PTB-binding 1 (Raver1) from Rattus norvegicus (Rat).